A 172-amino-acid chain; its full sequence is Histone H2A.Z-specific chaperone CHZ1 (172 aa).

2 stretches are compositionally biased toward basic and acidic residues: residues 1-10 and 54-68; these read MAEEIKDKQE and NYDD…EDKA. Residues 1–172 form a disordered region; that stretch reads MAEEIKDKQE…PAPASPTEPK (172 aa). 2 stretches are compositionally biased toward acidic residues: residues 78-88 and 96-105; these read EDSESEVDDEK and EDEEEDDLSE. Residues 121–139 are compositionally biased toward basic and acidic residues; that stretch reads KIIDYKKTAEKLEKNGEVG. Residues 140–155 are compositionally biased toward acidic residues; it reads KDDDDDEDDEENDEEF. A compositionally biased stretch (pro residues) spans 160–172; the sequence is APAPAPASPTEPK.

Belongs to the CHZ1 family. Forms a heterotrimer with H2A.Z-H2B, stabilizing the association of the histone dimer. Also, with a lower affinity, forms a heterotrimer with H2A-H2B.

The protein resides in the nucleus. Functionally, forms a chaperone-bound H2A.Z-H2B complex that acts as a source for SWR1 complex-dependent H2A to H2A.Z histone replacement in chromatin. In Kluyveromyces lactis (strain ATCC 8585 / CBS 2359 / DSM 70799 / NBRC 1267 / NRRL Y-1140 / WM37) (Yeast), this protein is Histone H2A.Z-specific chaperone CHZ1 (CHZ1).